The chain runs to 331 residues: Pantothenate kinase (331 aa).

An ATP-binding site is contributed by 109–116 (GSVAVGKS).

The protein belongs to the prokaryotic pantothenate kinase family.

It localises to the cytoplasm. It catalyses the reaction (R)-pantothenate + ATP = (R)-4'-phosphopantothenate + ADP + H(+). It participates in cofactor biosynthesis; coenzyme A biosynthesis; CoA from (R)-pantothenate: step 1/5. This Sinorhizobium fredii (strain NBRC 101917 / NGR234) protein is Pantothenate kinase.